Reading from the N-terminus, the 206-residue chain is tRNA(Phe) 7-((3-amino-3-carboxypropyl)-4-demethylwyosine(37)-N(4))-methyltransferase 2 (206 aa).

This sequence belongs to the TYW3 family.

It carries out the reaction 4-demethyl-7-[(3S)-3-amino-3-carboxypropyl]wyosine(37) in tRNA(Phe) + S-adenosyl-L-methionine = 7-[(3S)-3-amino-3-carboxypropyl]wyosine(37) in tRNA(Phe) + S-adenosyl-L-homocysteine + H(+). Its function is as follows. S-adenosyl-L-methionine-dependent methyltransferase that acts as a component of the wyosine derivatives biosynthesis pathway. Probably methylates N-4 position of wybutosine-86 to produce wybutosine-72. This is tRNA(Phe) 7-((3-amino-3-carboxypropyl)-4-demethylwyosine(37)-N(4))-methyltransferase 2 from Pyrococcus horikoshii (strain ATCC 700860 / DSM 12428 / JCM 9974 / NBRC 100139 / OT-3).